We begin with the raw amino-acid sequence, 412 residues long: Phosphoglycerate kinase (412 aa).

Substrate-binding positions include 26 to 28 (DFN), Arg42, 65 to 68 (HLGR), Arg133, and Arg166. Residues Lys217, Gly308, Glu339, and 368 to 371 (GGDS) contribute to the ATP site.

Belongs to the phosphoglycerate kinase family. As to quaternary structure, monomer.

The protein resides in the cytoplasm. The enzyme catalyses (2R)-3-phosphoglycerate + ATP = (2R)-3-phospho-glyceroyl phosphate + ADP. The protein operates within carbohydrate degradation; glycolysis; pyruvate from D-glyceraldehyde 3-phosphate: step 2/5. The sequence is that of Phosphoglycerate kinase from Synechococcus sp. (strain JA-2-3B'a(2-13)) (Cyanobacteria bacterium Yellowstone B-Prime).